Here is a 194-residue protein sequence, read N- to C-terminus: Granulocyte colony-stimulating factor (194 aa).

The first 20 residues, 1-20, serve as a signal peptide directing secretion; the sequence is KLMALQLLLWHSALWMVQEA. Intrachain disulfides connect Cys-56-Cys-62 and Cys-84-Cys-94. An O-linked (GalNAc...) threonine glycan is attached at Thr-153.

It belongs to the IL-6 superfamily. As to quaternary structure, monomer. O-glycosylated.

It is found in the secreted. In terms of biological role, granulocyte/macrophage colony-stimulating factors are cytokines that act in hematopoiesis by controlling the production, differentiation, and function of 2 related white cell populations of the blood, the granulocytes and the monocytes-macrophages. This CSF induces granulocytes. This is Granulocyte colony-stimulating factor (CSF3) from Felis catus (Cat).